The primary structure comprises 328 residues: MKAPVRVAVTGAAGQIGYALLFRIASGEMLGKDQPVILQLLELPIEKAQAALKGVMMELEDCAFPLLAGMVGTDDAEVAFKDVDVALLVGSRPRGPGMERKDLLLANAEIFTAQGAALNKVAKRDVKVLVVGNPANTNAYIAMKSAPDLDPKNFTAMLRLDHNRALSQLSAKLGKPVAGIEKLAVWGNHSPTMYPDYRFATADGASIGDAINDQEWNASTFIPTVGKRGAAIIEARGLSSAASAANAAIDHIRDWVLGTSGKWVTMGVPSDGSYGIPEGVMFGFPVTTENGKYTIVKDLPIDDFSQKYIDKTLAELEEERSGVAHLLG.

Gly11–Gly17 contributes to the NAD(+) binding site. Positions 94 and 100 each coordinate substrate. Residues Asn107, Gln114, and Val131–Asn133 each bind NAD(+). Asn133 and Arg164 together coordinate substrate. Catalysis depends on His189, which acts as the Proton acceptor.

This sequence belongs to the LDH/MDH superfamily. MDH type 2 family.

The catalysed reaction is (S)-malate + NAD(+) = oxaloacetate + NADH + H(+). Its function is as follows. Catalyzes the reversible oxidation of malate to oxaloacetate. The chain is Malate dehydrogenase from Xanthomonas axonopodis pv. citri (strain 306).